The primary structure comprises 401 residues: Dihydrolipoyllysine-residue succinyltransferase component of 2-oxoglutarate dehydrogenase complex (401 aa).

Residues 2–77 (SVKIIVPSLG…AVGEEIGEIN (76 aa)) enclose the Lipoyl-binding domain. An N6-lipoyllysine modification is found at Lys43. The Peripheral subunit-binding (PSBD) domain occupies 115–152 (ILAPSVQKLVTENKLDPNNIKGTGRDGRITKGDVLETI). Catalysis depends on residues His372 and Asp376.

The protein belongs to the 2-oxoacid dehydrogenase family. In terms of assembly, forms a 24-polypeptide structural core with octahedral symmetry. Part of the 2-oxoglutarate dehydrogenase (OGDH) complex composed of E1 (2-oxoglutarate dehydrogenase), E2 (dihydrolipoamide succinyltransferase) and E3 (dihydrolipoamide dehydrogenase); the complex contains multiple copies of the three enzymatic components (E1, E2 and E3). (R)-lipoate serves as cofactor.

It catalyses the reaction N(6)-[(R)-dihydrolipoyl]-L-lysyl-[protein] + succinyl-CoA = N(6)-[(R)-S(8)-succinyldihydrolipoyl]-L-lysyl-[protein] + CoA. It participates in amino-acid degradation; L-lysine degradation via saccharopine pathway; glutaryl-CoA from L-lysine: step 6/6. Its function is as follows. E2 component of the 2-oxoglutarate dehydrogenase (OGDH) complex which catalyzes the second step in the conversion of 2-oxoglutarate to succinyl-CoA and CO(2). This chain is Dihydrolipoyllysine-residue succinyltransferase component of 2-oxoglutarate dehydrogenase complex (sucB), found in Rickettsia felis (strain ATCC VR-1525 / URRWXCal2) (Rickettsia azadi).